A 592-amino-acid polypeptide reads, in one-letter code: Cyclin-dependent kinase-like 3 (592 aa).

The region spanning 4-286 (YETLGKVGEG…SSDLLHHEYF (283 aa)) is the Protein kinase domain. ATP contacts are provided by residues 10–18 (VGEGSYGTV) and lysine 33. A [NKR]KIAxRE motif is present at residues 44-50 (NKIAMRE). Aspartate 125 functions as the Proton acceptor in the catalytic mechanism. Residue threonine 158 is modified to Phosphothreonine. Tyrosine 160 bears the Phosphotyrosine mark. Residues 368–379 (GDISEPKKKEYE) are compositionally biased toward basic and acidic residues. Disordered regions lie at residues 368–390 (GDIS…ANEN) and 459–485 (RAKK…PGPI). A compositionally biased stretch (polar residues) spans 466 to 477 (SSQSIGQVMPNS).

Belongs to the protein kinase superfamily. CMGC Ser/Thr protein kinase family. CDC2/CDKX subfamily.

The protein localises to the cytoplasm. It carries out the reaction L-seryl-[protein] + ATP = O-phospho-L-seryl-[protein] + ADP + H(+). The catalysed reaction is L-threonyl-[protein] + ATP = O-phospho-L-threonyl-[protein] + ADP + H(+). In Homo sapiens (Human), this protein is Cyclin-dependent kinase-like 3.